The sequence spans 248 residues: Glutathione S-transferase omega-2 (248 aa).

The GST N-terminal domain occupies 22 to 101; that stretch reads GVIRIYSMRF…YLDDVYPGRK (80 aa). Catalysis depends on Cys-32, which acts as the Nucleophile. Glutathione-binding positions include Lys-59, Ile-72, and 85-86; that span reads ES. In terms of domain architecture, GST C-terminal spans 106-231; sequence DPYERARQKM…VFLGFLNLYF (126 aa).

This sequence belongs to the GST superfamily. Omega family.

It carries out the reaction RX + glutathione = an S-substituted glutathione + a halide anion + H(+). The catalysed reaction is L-dehydroascorbate + 2 glutathione = glutathione disulfide + L-ascorbate. It catalyses the reaction methylarsonate + 2 glutathione + H(+) = methylarsonous acid + glutathione disulfide + H2O. In terms of biological role, exhibits glutathione-dependent thiol transferase activity. Has high dehydroascorbate reductase activity and may contribute to the recycling of ascorbic acid. Participates in the biotransformation of inorganic arsenic and reduces monomethylarsonic acid (MMA). The protein is Glutathione S-transferase omega-2 (Gsto2) of Mus musculus (Mouse).